We begin with the raw amino-acid sequence, 295 residues long: Cyclin-G1 (295 aa).

The protein belongs to the cyclin family. Cyclin G subfamily.

It localises to the nucleus. May play a role in growth regulation. Is associated with G2/M phase arrest in response to DNA damage. May be an intermediate by which p53 mediates its role as an inhibitor of cellular proliferation. The protein is Cyclin-G1 (CCNG1) of Bos taurus (Bovine).